Consider the following 472-residue polypeptide: Deoxyribodipyrimidine photo-lyase (472 aa).

One can recognise a Photolyase/cryptochrome alpha/beta domain in the interval 2-134 (TTHLVWFRQD…VCEGFDDSVI (133 aa)). Residues asparagine 109 and glutamate 110 each coordinate (6R)-5,10-methylene-5,6,7,8-tetrahydrofolate. Residue tyrosine 223 coordinates FAD. Arginine 227 lines the DNA pocket. FAD contacts are provided by residues 235–239 (TSRLS), tryptophan 272, and 275–282 (ELIWREFY). Interaction with DNA stretches follow at residues 275-282 (ELIWREFY) and 342-343 (NR). 373–375 (DGD) is an FAD binding site. Residue glutamine 405 participates in DNA binding.

It belongs to the DNA photolyase class-1 family. Monomer. Requires FAD as cofactor. The cofactor is (6R)-5,10-methylene-5,6,7,8-tetrahydrofolate.

The enzyme catalyses cyclobutadipyrimidine (in DNA) = 2 pyrimidine residues (in DNA).. Its function is as follows. Involved in repair of UV radiation-induced DNA damage. Catalyzes the light-dependent monomerization (300-600 nm) of cyclobutyl pyrimidine dimers (in cis-syn configuration), which are formed between adjacent bases on the same DNA strand upon exposure to ultraviolet radiation. The protein is Deoxyribodipyrimidine photo-lyase (phrB) of Escherichia coli (strain K12).